The primary structure comprises 356 residues: Tyrosine recombinase XerS (356 aa).

The Core-binding (CB) domain occupies 16–121 (IMPWYVLDYY…ALSSLYKYLT (106 aa)). Positions 169-354 (AFLDYVDKEY…VNDEQKNALD (186 aa)) constitute a Tyr recombinase domain. Catalysis depends on residues R210, K234, H306, R309, and H332. The active-site O-(3'-phospho-DNA)-tyrosine intermediate is Y341.

Belongs to the 'phage' integrase family. XerS subfamily.

The protein localises to the cytoplasm. With respect to regulation, ftsK is required for recombination. Its function is as follows. Site-specific tyrosine recombinase, which acts by catalyzing the cutting and rejoining of the recombining DNA molecules. Essential to convert dimers of the bacterial chromosome into monomers to permit their segregation at cell division. The sequence is that of Tyrosine recombinase XerS from Streptococcus pyogenes serotype M2 (strain MGAS10270).